Consider the following 1819-residue polypeptide: Non-reducing polyketide synthase nscA (1819 aa).

The tract at residues arginine 25–histidine 277 is N-terminal acylcarrier protein transacylase domain (SAT). A Ketosynthase family 3 (KS3) domain is found at serine 413–aspartate 846. Catalysis depends on for beta-ketoacyl synthase activity residues cysteine 586, histidine 721, and histidine 764. The interval phenylalanine 952–serine 1249 is malonyl-CoA:ACP transacylase (MAT) domain. Residues threonine 1339 to proline 1658 form a product template (PT) domain region. Residues histidine 1343–alanine 1479 form an N-terminal hotdog fold region. In terms of domain architecture, PKS/mFAS DH spans histidine 1343–aspartate 1653. Residue histidine 1375 is the Proton acceptor; for dehydratase activity of the active site. The tract at residues alanine 1507–aspartate 1653 is C-terminal hotdog fold. Aspartate 1564 acts as the Proton donor; for dehydratase activity in catalysis. Positions serine 1703–proline 1742 are disordered. Residues threonine 1719–proline 1730 are compositionally biased toward low complexity. One can recognise a Carrier domain in the interval proline 1742 to cysteine 1819. Position 1779 is an O-(pantetheine 4'-phosphoryl)serine (serine 1779).

It depends on pantetheine 4'-phosphate as a cofactor.

The protein operates within secondary metabolite biosynthesis. Its function is as follows. Non-reducing polyketide synthase; part of the gene cluster that mediates the biosynthesis of neosartoricin B, a prenylated anthracenone that probably exhibits T-cell antiproliferative activity, suggestive of a physiological role as an immunosuppressive agent. The non-reducing polyketide synthase nscA probably synthesizes and cyclizes the decaketide backbone. The hydrolase nscB then mediates the product release through hydrolysis followed by spontaneous decarboxylation. The prenyltransferase nscD catalyzes the addition of the dimethylallyl group to the aromatic C5. The FAD-dependent monooxygenase nscC is then responsible for the stereospecific hydroxylation at C2. Neosartoricin B can be converted into two additional compounds neosartoricins C and D. Neosartoricin C is a spirocyclic compound that is cyclized through the attack of C3 hydroxyl on C14, followed by dehydration. On the other hand, neosartoricin D is a further cyclized compound in which attack of C2 on C14 in neosartoricin C results in the formation of the acetal-containing dioxabicyclo-octanone ring. Both of these compounds are novel and possibly represent related metabolites of the gene cluster. In Trichophyton verrucosum (strain HKI 0517), this protein is Non-reducing polyketide synthase nscA.